A 732-amino-acid polypeptide reads, in one-letter code: Polyribonucleotide nucleotidyltransferase (732 aa).

The Mg(2+) site is built by D503 and D509. The KH domain occupies 570–629 (PRLTSIQIPVDAIGLIIGKGGETIRSITEETGAEINIEDDGTVTIACSSPEGTNAAVETI). An S1 motif domain is found at 639-713 (GNTYLGKVRD…GKNRFALSIK (75 aa)). The segment at 710-732 (LSIKAVESEPEKSDENKAGTEGN) is disordered. Basic and acidic residues predominate over residues 715-732 (VESEPEKSDENKAGTEGN).

This sequence belongs to the polyribonucleotide nucleotidyltransferase family. Requires Mg(2+) as cofactor.

The protein localises to the cytoplasm. The enzyme catalyses RNA(n+1) + phosphate = RNA(n) + a ribonucleoside 5'-diphosphate. Involved in mRNA degradation. Catalyzes the phosphorolysis of single-stranded polyribonucleotides processively in the 3'- to 5'-direction. The polypeptide is Polyribonucleotide nucleotidyltransferase (Chlorobium phaeobacteroides (strain DSM 266 / SMG 266 / 2430)).